The following is a 211-amino-acid chain: MNGTMTSYCLALLGGYLLGSIPFGLILTRLSGAGDIRKIGSGNIGATNVLRTGRKGLAATTLLLDGGKGAAAALLAVHLGGWALALPAGIAAVIGHLFPVWLGFRGGKGVATGLGVLLATAWPVGLICCALWFAVARTIKISSAAALCAFAFAPLLALAVGGMGLGPPPLAQSHWQAAAAFMLIAVLVFLRHADNIARLRAGTESRIGTRS.

The next 5 helical transmembrane spans lie at 8–28, 84–104, 116–136, 145–165, and 170–190; these read YCLA…LILT, LALP…WLGF, VLLA…FAVA, AALC…GMGL, and LAQS…LVFL.

It belongs to the PlsY family. As to quaternary structure, probably interacts with PlsX.

Its subcellular location is the cell inner membrane. The catalysed reaction is an acyl phosphate + sn-glycerol 3-phosphate = a 1-acyl-sn-glycero-3-phosphate + phosphate. It participates in lipid metabolism; phospholipid metabolism. In terms of biological role, catalyzes the transfer of an acyl group from acyl-phosphate (acyl-PO(4)) to glycerol-3-phosphate (G3P) to form lysophosphatidic acid (LPA). This enzyme utilizes acyl-phosphate as fatty acyl donor, but not acyl-CoA or acyl-ACP. The protein is Glycerol-3-phosphate acyltransferase of Granulibacter bethesdensis (strain ATCC BAA-1260 / CGDNIH1).